The following is a 191-amino-acid chain: Fe/S biogenesis protein NfuA (191 aa).

[4Fe-4S] cluster is bound by residues cysteine 149 and cysteine 152.

The protein belongs to the NfuA family. In terms of assembly, homodimer. [4Fe-4S] cluster serves as cofactor.

Functionally, involved in iron-sulfur cluster biogenesis. Binds a 4Fe-4S cluster, can transfer this cluster to apoproteins, and thereby intervenes in the maturation of Fe/S proteins. Could also act as a scaffold/chaperone for damaged Fe/S proteins. This is Fe/S biogenesis protein NfuA from Buchnera aphidicola subsp. Baizongia pistaciae (strain Bp).